The sequence spans 301 residues: Protoheme IX farnesyltransferase (301 aa).

The next 9 helical transmembrane spans lie at 9–29 (VLAYIALTKPRVIELLLVATI), 42–62 (IALILSTLFGGWMGAASANSL), 89–109 (TSHAFVFGMTLGVASFLWLWW), 113–133 (LLAGCLVVLTIAFYVLVYTMV), 142–162 (VVWGGAAGCMPVMVGWSAVTG), 168–188 (PIVLFLVIFFWTPPHTWALAM), 211–231 (VTKQILLYSWAMVITSLTLVP), 232–252 (AAGVVYAAVTLVAGAWFLLMA), and 280–300 (VVFVGLAVDSVLGLQTVGSLL).

It belongs to the UbiA prenyltransferase family. Protoheme IX farnesyltransferase subfamily.

Its subcellular location is the cell membrane. The catalysed reaction is heme b + (2E,6E)-farnesyl diphosphate + H2O = Fe(II)-heme o + diphosphate. It functions in the pathway porphyrin-containing compound metabolism; heme O biosynthesis; heme O from protoheme: step 1/1. Functionally, converts heme B (protoheme IX) to heme O by substitution of the vinyl group on carbon 2 of heme B porphyrin ring with a hydroxyethyl farnesyl side group. This Rhodococcus jostii (strain RHA1) protein is Protoheme IX farnesyltransferase.